The sequence spans 417 residues: Serine hydroxymethyltransferase (417 aa).

Residues L121 and 125–127 each bind (6S)-5,6,7,8-tetrahydrofolate; that span reads GHL. The residue at position 229 (K229) is an N6-(pyridoxal phosphate)lysine. 355–357 lines the (6S)-5,6,7,8-tetrahydrofolate pocket; the sequence is SPF.

The protein belongs to the SHMT family. In terms of assembly, homodimer. It depends on pyridoxal 5'-phosphate as a cofactor.

The protein resides in the cytoplasm. The catalysed reaction is (6R)-5,10-methylene-5,6,7,8-tetrahydrofolate + glycine + H2O = (6S)-5,6,7,8-tetrahydrofolate + L-serine. It participates in one-carbon metabolism; tetrahydrofolate interconversion. The protein operates within amino-acid biosynthesis; glycine biosynthesis; glycine from L-serine: step 1/1. Catalyzes the reversible interconversion of serine and glycine with tetrahydrofolate (THF) serving as the one-carbon carrier. This reaction serves as the major source of one-carbon groups required for the biosynthesis of purines, thymidylate, methionine, and other important biomolecules. Also exhibits THF-independent aldolase activity toward beta-hydroxyamino acids, producing glycine and aldehydes, via a retro-aldol mechanism. The sequence is that of Serine hydroxymethyltransferase from Aeromonas salmonicida (strain A449).